A 462-amino-acid chain; its full sequence is UDP-N-acetylmuramoylalanine--D-glutamate ligase (462 aa).

Residue 117 to 123 coordinates ATP; that stretch reads GTNGKTT.

It belongs to the MurCDEF family.

Its subcellular location is the cytoplasm. The catalysed reaction is UDP-N-acetyl-alpha-D-muramoyl-L-alanine + D-glutamate + ATP = UDP-N-acetyl-alpha-D-muramoyl-L-alanyl-D-glutamate + ADP + phosphate + H(+). It participates in cell wall biogenesis; peptidoglycan biosynthesis. Cell wall formation. Catalyzes the addition of glutamate to the nucleotide precursor UDP-N-acetylmuramoyl-L-alanine (UMA). This chain is UDP-N-acetylmuramoylalanine--D-glutamate ligase, found in Parasynechococcus marenigrum (strain WH8102).